The primary structure comprises 130 residues: Small ribosomal subunit protein uS9 (130 aa).

Belongs to the universal ribosomal protein uS9 family.

This chain is Small ribosomal subunit protein uS9, found in Burkholderia pseudomallei (strain K96243).